The chain runs to 298 residues: uncharacterized protein (298 aa).

Over residues 1–17 (MLTKSAENKRNRKDDSM) the composition is skewed to basic and acidic residues. The interval 1–22 (MLTKSAENKRNRKDDSMRPGQQ) is disordered. Residues 167 to 227 (NKELTGTVYR…EDGSVNLSLL (61 aa)) form the S1 motif domain.

This is an uncharacterized protein from Bacillus subtilis (strain 168).